The sequence spans 961 residues: Leucine--tRNA ligase (961 aa).

The 'HIGH' region signature appears at 41-51; that stretch reads PYLNGNLHAGH. The 'KMSKS' region signature appears at 632–636; the sequence is KMSKS. Lys635 is an ATP binding site.

It belongs to the class-I aminoacyl-tRNA synthetase family.

The protein resides in the cytoplasm. The catalysed reaction is tRNA(Leu) + L-leucine + ATP = L-leucyl-tRNA(Leu) + AMP + diphosphate. In Methanosarcina acetivorans (strain ATCC 35395 / DSM 2834 / JCM 12185 / C2A), this protein is Leucine--tRNA ligase.